We begin with the raw amino-acid sequence, 391 residues long: 3-ketoacyl-CoA thiolase (391 aa).

The Acyl-thioester intermediate role is filled by cysteine 95. Active-site proton acceptor residues include histidine 347 and cysteine 377.

This sequence belongs to the thiolase-like superfamily. Thiolase family. As to quaternary structure, heterotetramer of two alpha chains (FadB) and two beta chains (FadA).

The protein resides in the cytoplasm. The enzyme catalyses an acyl-CoA + acetyl-CoA = a 3-oxoacyl-CoA + CoA. Its pathway is lipid metabolism; fatty acid beta-oxidation. Catalyzes the final step of fatty acid oxidation in which acetyl-CoA is released and the CoA ester of a fatty acid two carbons shorter is formed. This Alcanivorax borkumensis (strain ATCC 700651 / DSM 11573 / NCIMB 13689 / SK2) protein is 3-ketoacyl-CoA thiolase.